The primary structure comprises 149 residues: MERTFLMIKPDAVQRNLIGEVISRIERKGLKLVGGKLMQVPMELAETHYGEHQGKPFYNDLISFITSAPVFAMVVEGEDAVNVSRHIIGSTNPSEASPGSIRGDLGLTVGRNIIHGSDSLDSAEREINLWFNENEITSYASPRDAWLYE.

ATP contacts are provided by Lys-9, Phe-57, Arg-85, Thr-91, Arg-102, and Asn-112. The active-site Pros-phosphohistidine intermediate is His-115.

This sequence belongs to the NDK family. As to quaternary structure, homotetramer. The cofactor is Mg(2+).

It localises to the cytoplasm. The catalysed reaction is a 2'-deoxyribonucleoside 5'-diphosphate + ATP = a 2'-deoxyribonucleoside 5'-triphosphate + ADP. The enzyme catalyses a ribonucleoside 5'-diphosphate + ATP = a ribonucleoside 5'-triphosphate + ADP. Major role in the synthesis of nucleoside triphosphates other than ATP. The ATP gamma phosphate is transferred to the NDP beta phosphate via a ping-pong mechanism, using a phosphorylated active-site intermediate. In Staphylococcus aureus (strain MSSA476), this protein is Nucleoside diphosphate kinase.